The chain runs to 362 residues: uncharacterized protein (362 aa).

Basic and acidic residues predominate over residues 314–323; the sequence is GEEKEPKQES. The disordered stretch occupies residues 314-362; sequence GEEKEPKQESQEQLFNPFTIDEMLTEEQQQQQEEENNATEEEGDTVKLG. A compositionally biased stretch (acidic residues) spans 345–356; that stretch reads QEEENNATEEEG.

This is an uncharacterized protein from Acidianus two-tailed virus (ATV).